The sequence spans 352 residues: Protein CIA1 (352 aa).

WD repeat units follow at residues 18-64 (GHTD…RSWT), 72-111 (THTRTVRSCAWSPSGQLLATASFDGTTGIWKNYGSEFECI), 116-155 (GHENEVKSVSWNASGSCLATCSRDKSVWIWEVLEGNEYDC), 161-200 (GHTQDVKMVQWHPTMDVLFSCSYDNTIKVWWSEDDDGEYQ), 211-250 (GHSSTVWSISFNAAGDKMVTCSDDLTLKIWGTDIAKMQSG), 265-303 (YHDRTIYSAHWSRDDIIASGAGDNAIRLFVDSKHDSVDG), and 315-352 (AHENDVNSVQWSPGEGNRLLASASDDGMVKIWQLATKP).

It belongs to the WD repeat CIA1 family. Part of a complex composed of AE7, CIA1, MMS19 and NAR1. Interacts with AE7 and NAR1.

Its subcellular location is the nucleus. It is found in the cytoplasm. Essential component of the cytosolic iron-sulfur (Fe-S) protein assembly (CIA) machinery. Required for the maturation of extramitochondrial Fe/S proteins. The polypeptide is Protein CIA1 (Arabidopsis thaliana (Mouse-ear cress)).